The primary structure comprises 871 residues: MMQFQRDLEASLEAVSANAQELLKSLKSRKDVQDLNASLPKDPLDNCDAQTQAARAQLAEAATRILRLSIRPQEYLEHLQNGYQHLTCFRWLVELNILDHLPHSGTISYTDLARKASVPPMQLRSICRMAICNGFLEEPEANQVRHSRISALFARDESYLGWARWMVNYSVPAAYKLSDATRSWGETVAKDQTAFNLGMDVKVPFFDHLRQTPAMKDAFAAYMRNVTSNATWGLQHAVTGFDWASLPRGAKVVDVGGSLGHGSIAIAKEHTHLTFVIQDLPETVAGARKEMAQNDKIEASVKSRITFQEHDFFGPQTVKDADVYFLRMICHDWPDNEAKVILSQIRAALKPGAQIVIMDTILPQPGTTSVLQEQQLRIRDLTMMEVFNAKERELEDWSSLMQSAGLEISRVNQPLNSVMGLLTVRSAGQTALSGTNTLTPELVTAVSASTGSADSRPVLIAGAGIAGLCLAQALKKAGIDFRVFERDSHIDARPQGYRLKFEADAAQSLKNILPDDVYEAFELSNAVTAVGETDFNPFNGNIIHSRTGGGLSGKKGLYATFTVDRKAFRTQLMTGIEDKISFGKEIAYYKTDDSASTVTAEFKDGTHVTGSFLAGTDGLHSVVRKTCVPDHRIVDTGAACIYGKTVMTPEFLARFPEKGLRFMTVVSDIAPMLQSCLIGDSPVTLLLEPIRFSEASRARYPELPADYVYWALIGPKERFGSQEVTSMKNFVSLDQAAEQAAKLSLAVTEEWHPSLRALFELQDTKQASLIRVASTIPDIPSWESHSNVTVLGDSIHPMSPCGGVGANTAIVDADALAKVLVEHGTKPPVNAIAEFEAAMRTRAKRNIWRSEVGSKRMFGQKNLVDCSEFVF.

The interval methionine 1–glutamine 429 is O-methyltransferase. Aspartate 279 is a binding site for S-adenosyl-L-methionine. Histidine 331 acts as the Proton acceptor in catalysis. Residues threonine 430–phenylalanine 871 form an FAD-dependent monooxygenase region. FAD is bound by residues glutamate 485, arginine 569, aspartate 793, and alanine 806.

This sequence in the C-terminal section; belongs to the paxM FAD-dependent monooxygenase family. The protein in the N-terminal section; belongs to the class I-like SAM-binding methyltransferase superfamily. Cation-independent O-methyltransferase family. COMT subfamily.

It carries out the reaction nor-toralactone + S-adenosyl-L-methionine = toralactone + S-adenosyl-L-homocysteine + H(+). It catalyses the reaction toralactone + NADH + O2 + H(+) = 1-(3,4,5-trihydroxy-7-methoxynaphthalen-2-yl)propan-2-one + CO2 + NAD(+). Its pathway is mycotoxin biosynthesis. Functionally, dual O-methyltransferase/FAD-dependent monooxygenase; part of the gene cluster that mediates the biosynthesis of cercosporin, a light-activated, non-host-selective toxin. The perylenequinone chromophore of cercosporin absorbs light energy to attain an electronically-activated triplet state and produces active oxygen species such as the hydroxyl radical, superoxide, hydrogen peroxide or singlet oxygen upon reaction with oxygen molecules. These reactive oxygen species cause damage to various cellular components including lipids, proteins and nucleic acids. The first step of cercosporin biosynthesis is performed by the polyketide synthase CTB1 which catalyzes the formation of nor-toralactone. The starter unit acyltransferase (SAT) domain of CTB1 initiates polyketide extension by the selective utilization of acetyl-CoA, which is elongated to the heptaketide in the beta-ketoacyl synthase (KS) domain by successive condensations with six malonyl units introduced by the malonyl acyltransferase (MAT) domain. The product template (PT) domain catalyzes C4-C9 and C2-C11 aldol cyclizations and dehydrations to a trihydroxynaphthalene, which is thought to be delivered to the thioesterase (TE) domain for product release. The bifunctional enzyme CTB3 then methylates nor-toralactone to toralactone before conducting an unusual oxidative aromatic ring opening. The O-methyltransferase CTB2 further methylates the nascent OH-6 of the CBT3 product, blocking further oxidation at this site before the reductase CTB6 reduces the 2-oxopropyl ketone at position C7, giving naphthalene. The FAD-dependent monooxygenase CTB5 in concert with the multicopper oxidase CTB12 are responsible for homodimerization of naphthalene with CTB7 installing the dioxepine moiety, finally producing cercosporin. The fasciclin domain-containing protein CTB11 might act with CTB5 and CTB12 whereas the roles of CTB9 and CTB10 have still to be elucidated. The sequence is that of Dual O-methyltransferase/FAD-dependent monooxygenase CTB3 from Cercospora beticola (Sugarbeet leaf spot fungus).